A 335-amino-acid polypeptide reads, in one-letter code: MTENSDKVPIALVGPDDVEFCSPPAYAAVTVKPSSPARLLKVGAVVLISGAVLLLLGAIGAFYFWKGSDNHIYNVHYTMSINGKLQDGSMEIDAGNNLETFKMGSGAEEAVEVNDFQNGITGIRFAGGEKCYIKAQVKARIPEVGTMTKQSISSELEGKIMPVKYEENSLIWVAGDQPVKDNSFLSSKVLELCGDLPIFWLKPTYPKEIQRERRELVRKIVTTTTTRRLRSGPQGTPAPGRPNNGTRPSVQEDAEPFNPDNPYHQQEGESMTFDPRLDHEGICCIECRRSYTHCQKICEPLGGYHPWPYNYQGCRSACRVIMPCSWWVARILGMV.

Residues 45 to 65 (VVLISGAVLLLLGAIGAFYFW) traverse the membrane as a helical segment. The region spanning 104–201 (GSGAEEAVEV…LCGDLPIFWL (98 aa)) is the BRICHOS domain. Cysteines 131 and 193 form a disulfide. Residues 211–214 (RERR) constitute a propeptide that is removed on maturation. The segment at 221–269 (VTTTTTRRLRSGPQGTPAPGRPNNGTRPSVQEDAEPFNPDNPYHQQEGE) is disordered. Residue Thr-223 is glycosylated (N-linked (GlcNAc...) asparagine; in variant 223-N-E-224). Thr-236 carries O-linked (GalNAc...) threonine; partial glycosylation. Asn-244 is a glycosylation site (N-linked (GlcNAc...) asparagine). Disulfide bonds link Cys-283/Cys-287, Cys-284/Cys-324, Cys-294/Cys-318, and Cys-298/Cys-314.

The protein belongs to the chondromodulin-1 family. Post-translationally, after cleavage, the post-translationally modified ChM-I is secreted as a glycoprotein. Two other smaller nonglycosylated chondromodulin forms (9 kDa and 7 kDa) are found either in developing articular cartilage or in chondrocytes. The 9 kDa form could be processed by an extracellular matrix-associated protease as a metalloproteinase and the 7 kDa form could be processed intracellularly. As to expression, nasal and articular cartilage, and fetal epiphysis.

It localises to the secreted. The protein resides in the extracellular space. It is found in the extracellular matrix. The protein localises to the endomembrane system. Its function is as follows. Bifunctional growth regulator that stimulates the growth of cultured chondrocytes in the presence of basic fibroblast growth factor (FGF) but inhibits the growth of cultured vascular endothelial cells. May contribute to the rapid growth of cartilage and vascular invasion prior to the replacement of cartilage by bone during endochondral bone development. Inhibits in vitro tube formation and mobilization of endothelial cells. Plays a role as antiangiogenic factor in cardiac valves to suppress neovascularization. This is Leukocyte cell-derived chemotaxin 1 from Bos taurus (Bovine).